We begin with the raw amino-acid sequence, 514 residues long: Cobyric acid synthase (514 aa).

Residues 258–458 (ALMVGVVRLP…IHGIFDNDGL (201 aa)) enclose the GATase cobBQ-type domain. C339 serves as the catalytic Nucleophile. The active site involves H450.

It belongs to the CobB/CobQ family. CobQ subfamily.

It functions in the pathway cofactor biosynthesis; adenosylcobalamin biosynthesis. In terms of biological role, catalyzes amidations at positions B, D, E, and G on adenosylcobyrinic A,C-diamide. NH(2) groups are provided by glutamine, and one molecule of ATP is hydrogenolyzed for each amidation. This is Cobyric acid synthase from Syntrophobacter fumaroxidans (strain DSM 10017 / MPOB).